We begin with the raw amino-acid sequence, 451 residues long: Tubulin alpha-1 chain (451 aa).

Gln11 is a GTP binding site. N6-acetyllysine is present on Lys40. 5 residues coordinate GTP: Glu71, Thr145, Thr179, Asn206, and Asn228. Glu71 serves as a coordination point for Mg(2+). Glu254 is an active-site residue. The segment at 429–451 (EKDYEEVGAESGEGEEGDEGEEY) is disordered. Over residues 431–451 (DYEEVGAESGEGEEGDEGEEY) the composition is skewed to acidic residues.

This sequence belongs to the tubulin family. In terms of assembly, dimer of alpha and beta chains. A typical microtubule is a hollow water-filled tube with an outer diameter of 25 nm and an inner diameter of 15 nM. Alpha-beta heterodimers associate head-to-tail to form protofilaments running lengthwise along the microtubule wall with the beta-tubulin subunit facing the microtubule plus end conferring a structural polarity. Microtubules usually have 13 protofilaments but different protofilament numbers can be found in some organisms and specialized cells. Mg(2+) is required as a cofactor. In terms of processing, undergoes a tyrosination/detyrosination cycle, the cyclic removal and re-addition of a C-terminal tyrosine residue by the enzymes tubulin tyrosine carboxypeptidase (TTCP) and tubulin tyrosine ligase (TTL), respectively. Post-translationally, acetylation of alpha chains at Lys-40 stabilizes microtubules and affects affinity and processivity of microtubule motors. This modification has a role in multiple cellular functions, ranging from cell motility, cell cycle progression or cell differentiation to intracellular trafficking and signaling.

The protein localises to the cytoplasm. The protein resides in the cytoskeleton. It carries out the reaction GTP + H2O = GDP + phosphate + H(+). In terms of biological role, tubulin is the major constituent of microtubules, a cylinder consisting of laterally associated linear protofilaments composed of alpha- and beta-tubulin heterodimers. Microtubules grow by the addition of GTP-tubulin dimers to the microtubule end, where a stabilizing cap forms. Below the cap, tubulin dimers are in GDP-bound state, owing to GTPase activity of alpha-tubulin. The polypeptide is Tubulin alpha-1 chain (TUBA1) (Anemia phyllitidis (Fern)).